A 236-amino-acid polypeptide reads, in one-letter code: Putative protein ZBED10P (236 aa).

This chain is Putative protein ZBED10P, found in Homo sapiens (Human).